The sequence spans 80 residues: Acyl carrier protein (80 aa).

One can recognise a Carrier domain in the interval 4–79 (DEIFSKVRSI…DVVNFIKKRK (76 aa)). Residue Ser-39 is modified to O-(pantetheine 4'-phosphoryl)serine.

It belongs to the acyl carrier protein (ACP) family. Post-translationally, 4'-phosphopantetheine is transferred from CoA to a specific serine of apo-ACP by AcpS. This modification is essential for activity because fatty acids are bound in thioester linkage to the sulfhydryl of the prosthetic group.

The protein localises to the cytoplasm. It functions in the pathway lipid metabolism; fatty acid biosynthesis. Carrier of the growing fatty acid chain in fatty acid biosynthesis. This chain is Acyl carrier protein, found in Borreliella burgdorferi (strain ATCC 35210 / DSM 4680 / CIP 102532 / B31) (Borrelia burgdorferi).